We begin with the raw amino-acid sequence, 1469 residues long: MAPHEKGVNPSESPSGSLKKAPPSGPKALRGFASPSAFRNAGIGNGLLQHRGEDERISFAFPRKGKESLDRNGERPAPMSLESRLGPPVSRFNRPVGGDSLERGNGKGGWDNRDERTSASSSSIHRINKEKIRPRSDFIESSANLYSEDDRNRDRGRYHERDRSRGTNGDRGGGEGHSHREPGRGKEHQNGQGRDRSLYRDHSRERESSRDERDRYSEEYKHQRSKARFSPSPSPERSRLKSSLGRHRSPVSVSSSSSSSARSPPPVQNREPLRYNGSQSKNGEKELSNGLLENSISRSGVSIAVPRKLETKQLVRPSPPHVNLKSTIQDNPSPPTGKYPPSPPSLDILSKPSCNREPLPDQRPPTPPLPENSSPTSPSLESSRFDQNQHLLPDELPLPPLSISFPQKPVSSSSLSRLSSLSAALSRPNPLDKDGTSMPPSFHFREISNRHQRLSPPNNAENQLPETSIIPPPPSETVPEPPWIRPPYIPPPCTKHRPGIGNFFITNLREKVEDKSGKEEKRVDGMEGGKVVQVTDPRLSMTEEQRGRGRGSSKQRAAFYELTYEWDLYSVTPKPPSPPTAVLITGLGPLTTVDQITKFLRPHGRIKEIDSKVDRKTDMQLGICWVKFEGPPLGRPGTAHDVASMAVKVCDGKKISMGGERIRVVLDGRGKRAEQAVKEEMERRYPPKKPSALPSDMKVTPLSGTAMATTSRPPNAPNASTPLIDKQTFDTSAKAPIIRPGVLKPLGQKMYHRPSAPPLVFNNHRFRDESFLNRPFNAGAGMISQQQMGYKILPGKPVQQLASSFTSAPFVRHPRERREDSWTNERGRRLKGESSTRHWRARSLSRSSYSSYSSYSSYSEESEEERPRHPTKVPYPQRKRLATGPSKEDEYKMEDVREAIRENGHPCVFIDAKSLPAAREYESRQSHLGWYILFADDTTAYRVQRVLDTTAVQGHRLSLVVHTSSGPRAQTDASEPVTGGVGESKKGNWRYLTITKKSRPMPAVKKSGKSATIRRKVYSPSVSGSDDDDEQVPVMAQNRKRAPSYASSTSPLSEDDRPFARSVQREERDIDKEGKFSLIGKKADVVSVKAAKGPKSKTIRVDSDEVEENQGVPLASIGEVTKAEGKQDDSTVVKLETLLSESISELTKGKKRPTKAKGGKATKKVRLDQEADDAATKIQIDEDIVPQPPKKKKVVKTEVDKLLASGVLMDEEDAYWLGRVLAAQEDGLEPIWSDGEEDLVDEGHPLFHKSGAWRAEGWKKVAQVQKSRYLPQRNRAVVNSEDVGGITTGRTARLAGRDQHRQTAAVAANNTVESDLFAFNQLRIRKKQLRFARSAIEGYGLYAMETIHAGEMVCEYVGDLVRATVADVREQRYLKQGIGSSYLFRIDNDIVCDATFKGSVSRLINHSCDPSANAKIIKVNGQSKIVIYAERTLYPGEEILYDYKFPLESDPALRVPCLCGAATCRGWLN.

Disordered regions lie at residues 1-478, 676-699, 805-839, 858-891, 963-984, and 999-1068; these read MAPH…SETV, AVKEEMERRYPPKKPSALPSDMKV, FTSAPFVRHPRERREDSWTNERGRRLKGESSTRHW, YSEESEEERPRHPTKVPYPQRKRLATGPSKEDEY, TSSGPRAQTDASEPVTGGVGES, and RPMP…REER. 5 stretches are compositionally biased toward basic and acidic residues: residues 64–74, 100–117, 127–138, 148–165, and 172–222; these read KGKESLDRNGE, SLERGNGKGGWDNRDERT, INKEKIRPRSDF, EDDRNRDRGRYHERDRSR, and GGGE…EYKH. A compositionally biased stretch (low complexity) spans 250–262; it reads PVSVSSSSSSSAR. Residues 291–300 show a composition bias toward polar residues; that stretch reads LLENSISRSG. Composition is skewed to pro residues over residues 332–344 and 361–370; these read PSPPTGKYPPSPP and DQRPPTPPLP. Composition is skewed to low complexity over residues 371–382 and 411–427; these read ENSSPTSPSLES and SSSSLSRLSSLSAALSR. A compositionally biased stretch (polar residues) spans 455–464; sequence SPPNNAENQL. 2 stretches are compositionally biased toward basic and acidic residues: residues 676–685 and 816–836; these read AVKEEMERRY and ERREDSWTNERGRRLKGESST. Residues 963-973 are compositionally biased toward polar residues; sequence TSSGPRAQTDA. A compositionally biased stretch (basic residues) spans 1006–1017; sequence KSGKSATIRRKV. Residues 1054–1068 show a composition bias toward basic and acidic residues; that stretch reads EDDRPFARSVQREER. The SET domain maps to 1327–1444; it reads KQLRFARSAI…PGEEILYDYK (118 aa). S-adenosyl-L-methionine is bound at residue Tyr1443. The Post-SET domain occupies 1453–1469; sequence LRVPCLCGAATCRGWLN.

The protein belongs to the class V-like SAM-binding methyltransferase superfamily. In terms of assembly, component of the Set1C/COMPASS complex.

It localises to the nucleus. The protein resides in the chromosome. It carries out the reaction L-lysyl(4)-[histone H3] + 3 S-adenosyl-L-methionine = N(6),N(6),N(6)-trimethyl-L-lysyl(4)-[histone H3] + 3 S-adenosyl-L-homocysteine + 3 H(+). The enzyme catalyses N(6)-methyl-L-lysyl(4)-[histone H3] + S-adenosyl-L-methionine = N(6),N(6)-dimethyl-L-lysyl(4)-[histone H3] + S-adenosyl-L-homocysteine + H(+). The catalysed reaction is N(6),N(6)-dimethyl-L-lysyl(4)-[histone H3] + S-adenosyl-L-methionine = N(6),N(6),N(6)-trimethyl-L-lysyl(4)-[histone H3] + S-adenosyl-L-homocysteine + H(+). In terms of biological role, catalytic component of the COMPASS (Set1C) complex that specifically mono-, di- and trimethylates histone H3 to form H3K4me1/2/3. Binds RNAs which might negatively affect its histone methyltransferase activity. COMPASS recognizes ubiquitinated H2B on one face of the nucleosome which stimulates the methylation of H3 on the opposing face. The sequence is that of Histone-lysine N-methyltransferase, H3 lysine-4 specific (SET1) from Cryptococcus neoformans var. neoformans serotype D (strain B-3501A) (Filobasidiella neoformans).